The chain runs to 155 residues: MRKSAAPKRPVVKDPVYDSELVTQLVNKILLDGKKSTAERIVYGALEICREKTGLEPVGTLEKALGNVRPDLEVRSRRVGGATYQVPVEVRPARATTLALRWLVTFTRQRRENTMVERLANEIMDAANGLGASVKRREDTHKMAEANRAFAHYRW.

This sequence belongs to the universal ribosomal protein uS7 family. In terms of assembly, part of the 30S ribosomal subunit. Contacts proteins S9 and S11.

Its function is as follows. One of the primary rRNA binding proteins, it binds directly to 16S rRNA where it nucleates assembly of the head domain of the 30S subunit. Is located at the subunit interface close to the decoding center, probably blocks exit of the E-site tRNA. The chain is Small ribosomal subunit protein uS7 from Corynebacterium efficiens (strain DSM 44549 / YS-314 / AJ 12310 / JCM 11189 / NBRC 100395).